The following is a 358-amino-acid chain: Ganglioside-induced differentiation-associated protein 1 (358 aa).

Positions 24–105 (VHLILYHWTH…YLEQTFLDER (82 aa)) constitute a GST N-terminal domain. Glycyl lysine isopeptide (Lys-Gly) (interchain with G-Cter in ubiquitin) cross-links involve residues Lys-50, Lys-172, Lys-173, Lys-188, and Lys-190. In terms of domain architecture, GST C-terminal spans 153–309 (PAYATTRIRS…LISAVLPTAF (157 aa)). Lys-203 is modified (N6-acetyllysine; alternate). A Glycyl lysine isopeptide (Lys-Gly) (interchain with G-Cter in ubiquitin); alternate cross-link involves residue Lys-203. Glycyl lysine isopeptide (Lys-Gly) (interchain with G-Cter in ubiquitin) cross-links involve residues Lys-206, Lys-207, and Lys-214. 2 helical membrane passes run 292-312 (VLGH…FRVA) and 320-340 (LGST…FMLF). Positions 320–358 (LGSTLVVGLLVGMGYFAFMLFRRRLGSMILALRPRPNYF) are required for mitochondrial localization.

This sequence belongs to the GST superfamily. Homodimer. In terms of processing, ubiquitinated by PRKN during mitophagy, leading to its degradation and enhancement of mitophagy. Deubiquitinated by USP30. As to expression, expressed in brain, spinal cord, muscles and intestinal villi. In the central nervous system expressed most prominently in the cortex, cerebellum, thalamus, olfactory bulb, and spinal cord. Expressed also in sciatic nerves and in dorsal root ganglia.

The protein localises to the mitochondrion outer membrane. It is found in the cytoplasm. Its function is as follows. Regulates the mitochondrial network by promoting mitochondrial fission. The chain is Ganglioside-induced differentiation-associated protein 1 (Gdap1) from Mus musculus (Mouse).